The primary structure comprises 263 residues: Tryptophan synthase alpha chain (263 aa).

Catalysis depends on proton acceptor residues Glu49 and Asp60.

It belongs to the TrpA family. Tetramer of two alpha and two beta chains.

The catalysed reaction is (1S,2R)-1-C-(indol-3-yl)glycerol 3-phosphate + L-serine = D-glyceraldehyde 3-phosphate + L-tryptophan + H2O. It functions in the pathway amino-acid biosynthesis; L-tryptophan biosynthesis; L-tryptophan from chorismate: step 5/5. Its function is as follows. The alpha subunit is responsible for the aldol cleavage of indoleglycerol phosphate to indole and glyceraldehyde 3-phosphate. In Clostridium kluyveri (strain NBRC 12016), this protein is Tryptophan synthase alpha chain.